Reading from the N-terminus, the 593-residue chain is Proteasome-associated ATPase (593 aa).

Residues Leu23–Gln95 are a coiled coil. An ATP-binding site is contributed by Gly282–Leu287. The interval Tyr592–Leu593 is docks into pockets in the proteasome alpha-ring.

This sequence belongs to the AAA ATPase family. Homohexamer. Assembles into a hexameric ring structure that caps the 20S proteasome core. Strongly interacts with the prokaryotic ubiquitin-like protein Pup through a hydrophobic interface; the interacting region of ARC lies in its N-terminal coiled-coil domain. There is one Pup binding site per ARC hexamer ring. Upon ATP-binding, the C-terminus of ARC interacts with the alpha-rings of the proteasome core, possibly by binding to the intersubunit pockets.

Its pathway is protein degradation; proteasomal Pup-dependent pathway. Functionally, ATPase which is responsible for recognizing, binding, unfolding and translocation of pupylated proteins into the bacterial 20S proteasome core particle. May be essential for opening the gate of the 20S proteasome via an interaction with its C-terminus, thereby allowing substrate entry and access to the site of proteolysis. Thus, the C-termini of the proteasomal ATPase may function like a 'key in a lock' to induce gate opening and therefore regulate proteolysis. The protein is Proteasome-associated ATPase of Geodermatophilus obscurus (strain ATCC 25078 / DSM 43160 / JCM 3152 / CCUG 61914 / KCC A-0152 / KCTC 9177 / NBRC 13315 / NRRL B-3577 / G-20).